The chain runs to 377 residues: Nitric oxide reductase FlRd-NAD(+) reductase (377 aa).

Belongs to the FAD-dependent oxidoreductase family. The cofactor is FAD.

It localises to the cytoplasm. The enzyme catalyses 2 reduced [nitric oxide reductase rubredoxin domain] + NAD(+) + H(+) = 2 oxidized [nitric oxide reductase rubredoxin domain] + NADH. Its pathway is nitrogen metabolism; nitric oxide reduction. One of at least two accessory proteins for anaerobic nitric oxide (NO) reductase. Reduces the rubredoxin moiety of NO reductase. This is Nitric oxide reductase FlRd-NAD(+) reductase (norW) from Shigella boydii serotype 4 (strain Sb227).